Here is a 275-residue protein sequence, read N- to C-terminus: NH(3)-dependent NAD(+) synthetase (275 aa).

50-57 is an ATP binding site; the sequence is GISGGVDS. Mg(2+) is bound at residue aspartate 56. Arginine 147 lines the deamido-NAD(+) pocket. ATP is bound at residue threonine 167. Residue glutamate 172 coordinates Mg(2+). 2 residues coordinate deamido-NAD(+): lysine 180 and aspartate 187. Residues lysine 196 and threonine 218 each coordinate ATP. 267-268 contacts deamido-NAD(+); it reads HK.

Belongs to the NAD synthetase family. As to quaternary structure, homodimer.

The catalysed reaction is deamido-NAD(+) + NH4(+) + ATP = AMP + diphosphate + NAD(+) + H(+). Its pathway is cofactor biosynthesis; NAD(+) biosynthesis; NAD(+) from deamido-NAD(+) (ammonia route): step 1/1. In terms of biological role, catalyzes the ATP-dependent amidation of deamido-NAD to form NAD. Uses ammonia as a nitrogen source. The polypeptide is NH(3)-dependent NAD(+) synthetase (Pseudomonas savastanoi pv. phaseolicola (strain 1448A / Race 6) (Pseudomonas syringae pv. phaseolicola (strain 1448A / Race 6))).